The primary structure comprises 83 residues: MSGNTGERPFADIITSIRYWVIHSITIPSLFIAGWLFVSTGLAYDVFGSPRPNEYFTESRQEIPLITGRFNSLEQVDEFTRSL.

Residues Val21–Trp35 traverse the membrane as a helical segment. His23 contributes to the heme binding site.

It belongs to the PsbE/PsbF family. In terms of assembly, heterodimer of an alpha subunit and a beta subunit. PSII is composed of 1 copy each of membrane proteins PsbA, PsbB, PsbC, PsbD, PsbE, PsbF, PsbH, PsbI, PsbJ, PsbK, PsbL, PsbM, PsbT, PsbX, PsbY, PsbZ, Psb30/Ycf12, at least 3 peripheral proteins of the oxygen-evolving complex and a large number of cofactors. It forms dimeric complexes. Requires heme b as cofactor.

It localises to the plastid. The protein localises to the chloroplast thylakoid membrane. Functionally, this b-type cytochrome is tightly associated with the reaction center of photosystem II (PSII). PSII is a light-driven water:plastoquinone oxidoreductase that uses light energy to abstract electrons from H(2)O, generating O(2) and a proton gradient subsequently used for ATP formation. It consists of a core antenna complex that captures photons, and an electron transfer chain that converts photonic excitation into a charge separation. The polypeptide is Cytochrome b559 subunit alpha (Huperzia lucidula (Shining clubmoss)).